Reading from the N-terminus, the 261-residue chain is CD40 ligand (261 aa).

Residues 1–22 are Cytoplasmic-facing; sequence MIETYSQPSPRSVAAGPPVSMK. Residues 23–43 traverse the membrane as a helical; Signal-anchor for type II membrane protein segment; sequence IFMYLLTVFLITQMIGSALFA. The Extracellular portion of the chain corresponds to 44 to 240; the sequence is AYLHRRLDKI…LQPGASVFVN (197 aa). One can recognise a THD domain in the interval 122–261; it reads IAAHVISEAS…GFTSFGLLKL (140 aa). The cysteines at positions 178 and 218 are disulfide-linked. Asn-240 is a glycosylation site (N-linked (GlcNAc...) asparagine).

It belongs to the tumor necrosis factor family. As to quaternary structure, homotrimer. Interacts with CD28. CD40 ligand, soluble form: Exists as either a monomer or a homotrimer. Forms a ternary complex between CD40 and integrins for CD40-CD40LG signaling. Post-translationally, the soluble form derives from the membrane form by proteolytic processing.

The protein resides in the cell membrane. It localises to the cell surface. Its subcellular location is the secreted. Functionally, cytokine that acts as a ligand to CD40/TNFRSF5. Costimulates T-cell proliferation and cytokine production. Its cross-linking on T-cells generates a costimulatory signal which enhances the production of IL4 and IL10 in conjunction with the TCR/CD3 ligation and CD28 costimulation. Induces the activation of NF-kappa-B. Induces the activation of kinases MAPK8 and PAK2 in T-cells. Mediates B-cell proliferation in the absence of co-stimulus as well as IgE production in the presence of IL4. Involved in immunoglobulin class switching. Acts as a ligand for integrins, specifically ITGA5:ITGB1 and ITGAV:ITGB3; both integrins and the CD40 receptor are required for activation of CD40-CD40LG signaling, which have cell-type dependent effects, such as B-cell activation, NF-kappa-B signaling and anti-apoptotic signaling. The polypeptide is CD40 ligand (CD40LG) (Sus scrofa (Pig)).